We begin with the raw amino-acid sequence, 353 residues long: tRNA N6-adenosine threonylcarbamoyltransferase (353 aa).

Fe cation contacts are provided by histidine 109 and histidine 113. Substrate is bound by residues 136 to 140 (TVSGG), aspartate 169, glycine 182, aspartate 186, and asparagine 284. Aspartate 312 contacts Fe cation.

It belongs to the KAE1 / TsaD family. Requires Fe(2+) as cofactor.

Its subcellular location is the cytoplasm. The enzyme catalyses L-threonylcarbamoyladenylate + adenosine(37) in tRNA = N(6)-L-threonylcarbamoyladenosine(37) in tRNA + AMP + H(+). Its function is as follows. Required for the formation of a threonylcarbamoyl group on adenosine at position 37 (t(6)A37) in tRNAs that read codons beginning with adenine. Is involved in the transfer of the threonylcarbamoyl moiety of threonylcarbamoyl-AMP (TC-AMP) to the N6 group of A37, together with TsaE and TsaB. TsaD likely plays a direct catalytic role in this reaction. The sequence is that of tRNA N6-adenosine threonylcarbamoyltransferase from Chlorobium limicola (strain DSM 245 / NBRC 103803 / 6330).